The sequence spans 70 residues: uncharacterized protein (70 aa).

The HTH cro/C1-type domain occupies 5-59 (IREFRAKYGMTQEELAKKVGVRRETIVFLEKGKYNPSLRLAYKIARVFNARIEDL). The H-T-H motif DNA-binding region spans 16 to 35 (QEELAKKVGVRRETIVFLEK).

This is an uncharacterized protein from Archaeoglobus fulgidus (strain ATCC 49558 / DSM 4304 / JCM 9628 / NBRC 100126 / VC-16).